The primary structure comprises 275 residues: NAD kinase (275 aa).

The active-site Proton acceptor is the D68. Residues 68–69 (DG), R73, 136–137 (NE), K147, R164, D166, 177–182 (TAYAMS), A201, and Q236 each bind NAD(+).

Belongs to the NAD kinase family. It depends on a divalent metal cation as a cofactor.

The protein resides in the cytoplasm. It catalyses the reaction NAD(+) + ATP = ADP + NADP(+) + H(+). In terms of biological role, involved in the regulation of the intracellular balance of NAD and NADP, and is a key enzyme in the biosynthesis of NADP. Catalyzes specifically the phosphorylation on 2'-hydroxyl of the adenosine moiety of NAD to yield NADP. This Methanosarcina acetivorans (strain ATCC 35395 / DSM 2834 / JCM 12185 / C2A) protein is NAD kinase.